The following is a 40-amino-acid chain: Snaclec LmrLEC-1 (40 aa).

The cysteines at positions 2 and 13 are disulfide-linked.

The protein belongs to the snaclec family. Dimer (non-covalently linked) of heterodimers of subunits alpha and beta (disulfide-linked). Expressed by the venom gland.

It localises to the secreted. Interferes with one step of hemostasis (modulation of platelet aggregation, or coagulation cascade, for example). This Lachesis muta rhombeata (Bushmaster) protein is Snaclec LmrLEC-1.